The sequence spans 234 residues: RNA-binding protein pno1 (234 aa).

The disordered stretch occupies residues 1-39 (MPTQDSAAKQADDGFQLVQKKSRKRKMTMDMDDADPKAG). Residues 158–207 (LARCIGRLAGKGGRTKFTIENVTKTRIVLADSKVHILGSYQNIRAARTAL) form the KH domain.

The protein belongs to the PNO1 family.

It localises to the nucleus. Its subcellular location is the nucleolus. The chain is RNA-binding protein pno1 from Ixodes scapularis (Black-legged tick).